Here is a 93-residue protein sequence, read N- to C-terminus: Small ribosomal subunit protein uS19 (93 aa).

The protein belongs to the universal ribosomal protein uS19 family.

In terms of biological role, protein S19 forms a complex with S13 that binds strongly to the 16S ribosomal RNA. The protein is Small ribosomal subunit protein uS19 (rpsS) of Thermus thermophilus (strain ATCC BAA-163 / DSM 7039 / HB27).